We begin with the raw amino-acid sequence, 145 residues long: Ubiquitin-conjugating enzyme E2 variant 1C (145 aa).

One can recognise a UBC core domain in the interval 12–145 (PRNFRLLEEL…LVQPPEGTFF (134 aa)).

This sequence belongs to the ubiquitin-conjugating enzyme family. In terms of assembly, heterodimer with UBC35 or UBC36. In terms of tissue distribution, expressed in roots, shoots, leaves, stems and flowers, but not in pollen.

Functionally, has no ubiquitin ligase activity on its own. The heterodimer with UBC catalyzes the synthesis of non-canonical poly-ubiquitin chains that are linked through 'Lys-63'. This type of poly-ubiquitination does not lead to protein degradation by the proteasome. Mediates transcriptional activation of target genes. May play a role in the control of progress through the cell cycle and differentiation. May play a role in the error-free DNA repair pathway and contributes to the survival of cells after DNA damage. This Arabidopsis thaliana (Mouse-ear cress) protein is Ubiquitin-conjugating enzyme E2 variant 1C (UEV1C).